Reading from the N-terminus, the 359-residue chain is N6-succino-2-amino-2'-deoxyadenylate synthase (359 aa).

The Proton acceptor role is filled by serine 23. The ATP site is built by serine 23, threonine 24, glycine 25, lysine 26, and glycine 27. Serine 23 lines the dGMP pocket. Serine 23 provides a ligand contact to Mg(2+). Asparagine 49 contacts dGMP. Residues glycine 51, histidine 52, and threonine 53 each coordinate ATP. Mg(2+) is bound at residue glycine 51. DGMP is bound by residues serine 131, threonine 132, and arginine 146. Glutamine 190 is a binding site for ATP. A dGMP-binding site is contributed by threonine 205. Threonine 274 contributes to the Mg(2+) binding site. L-aspartate contacts are provided by threonine 274, valine 275, and arginine 280. 2 residues coordinate ATP: asparagine 305 and glutamine 308.

It belongs to the Caudovirales PurZ family. Mg(2+) is required as a cofactor.

It catalyses the reaction dGMP + L-aspartate + ATP = (2S)-2-amino-2'-deoxyadenylo-succinate + ADP + phosphate + 2 H(+). The protein operates within purine metabolism. Functionally, involved in the synthesis of the atypical nucleotide dZTP (2-amino-2'-deoxyadenosine-5'-triphosphate). Catalyzes the condensation of aspartate with deoxyguanylate into dSMP (N6-succino-2-amino-2'-deoxyadenylate), which undergoes defumarylation and phosphorylation respectively by host PurB and guanylate/nucleoside diphosphate kinases to give dZTP. dZTP is integrated into the viral genome instead of adenine by the viral DNA polymerase. This Z-base probably completely replaces adenosine and forms a triple bond to the opposite T-base. The resulting non-standard viral DNA is called Z-genome. The chemically modified DNA is probably harder for the host bacteria to digest with nucleases or restriction enzymes. The chain is N6-succino-2-amino-2'-deoxyadenylate synthase from Cyanophage S-2L (Cyanobacteria phage S-2L).